The chain runs to 321 residues: Tetraacyldisaccharide 4'-kinase (321 aa).

ATP is bound at residue 54–61; that stretch reads SVGGTGKT.

It belongs to the LpxK family.

It catalyses the reaction a lipid A disaccharide + ATP = a lipid IVA + ADP + H(+). It functions in the pathway glycolipid biosynthesis; lipid IV(A) biosynthesis; lipid IV(A) from (3R)-3-hydroxytetradecanoyl-[acyl-carrier-protein] and UDP-N-acetyl-alpha-D-glucosamine: step 6/6. Its function is as follows. Transfers the gamma-phosphate of ATP to the 4'-position of a tetraacyldisaccharide 1-phosphate intermediate (termed DS-1-P) to form tetraacyldisaccharide 1,4'-bis-phosphate (lipid IVA). This chain is Tetraacyldisaccharide 4'-kinase, found in Rickettsia bellii (strain OSU 85-389).